We begin with the raw amino-acid sequence, 375 residues long: 23S rRNA (uracil(747)-C(5))-methyltransferase RlmC (375 aa).

C3, C11, C14, and C87 together coordinate [4Fe-4S] cluster. Positions 212, 241, 262, and 307 each coordinate S-adenosyl-L-methionine. Catalysis depends on C334, which acts as the Nucleophile.

Belongs to the class I-like SAM-binding methyltransferase superfamily. RNA M5U methyltransferase family. RlmC subfamily.

The catalysed reaction is uridine(747) in 23S rRNA + S-adenosyl-L-methionine = 5-methyluridine(747) in 23S rRNA + S-adenosyl-L-homocysteine + H(+). In terms of biological role, catalyzes the formation of 5-methyl-uridine at position 747 (m5U747) in 23S rRNA. This is 23S rRNA (uracil(747)-C(5))-methyltransferase RlmC from Shigella boydii serotype 4 (strain Sb227).